Consider the following 460-residue polypeptide: Xyloglucan 6-xylosyltransferase 1 (460 aa).

Residues 1 to 20 (MIEKCIGAHRFRRLQRFMRQ) lie on the Cytoplasmic side of the membrane. A helical; Signal-anchor for type II membrane protein membrane pass occupies residues 21–40 (GKVTILCLVLTVIVLRGTIG). Residues 41 to 460 (AGKFGTPEKD…KAAKLSTTTT (420 aa)) are Lumenal-facing. Residues Gly156 and 227-229 (DSD) contribute to the UDP-alpha-D-xylose site. Mn(2+)-binding residues include Asp227 and Asp229. His346 contributes to the substrate binding site. His377, Gly380, and Lys382 together coordinate UDP-alpha-D-xylose. Position 377 (His377) interacts with Mn(2+). Substrate contacts are provided by residues Lys382 and 389 to 390 (DY). The N-linked (GlcNAc...) asparagine glycan is linked to Asn431.

It belongs to the glycosyltransferase 34 family. In terms of assembly, forms homodimer. Interacts with XXT2. The cofactor is Mn(2+).

The protein resides in the golgi apparatus membrane. The catalysed reaction is Transfers an alpha-D-xylosyl residue from UDP-D-xylose to a glucose residue in xyloglucan, forming an alpha-(1-&gt;6)-D-xylosyl-D-glucose linkage.. It functions in the pathway protein modification; protein glycosylation. Xylosyltransferase specific to UDP-D-xylose that accepts both cellopentaose and cellohexaose as substrates, with a better use of cellohexaose, to produce xyloglucan. Adds preferentially the first xylosyl residue to the fourth glucosyl residue from the reducing end of both acceptors. Transfer one xylose mainly to the second glucose residue from the non-reducing end. The acceptor should have a minimum of four glucose residues. The protein is Xyloglucan 6-xylosyltransferase 1 of Arabidopsis thaliana (Mouse-ear cress).